We begin with the raw amino-acid sequence, 219 residues long: Ribose-5-phosphate isomerase A (219 aa).

Substrate is bound by residues 28–31 (SGST), 81–84 (DGAD), and 94–97 (KGGG). The active-site Proton acceptor is E103. Position 121 (K121) interacts with substrate.

Belongs to the ribose 5-phosphate isomerase family. As to quaternary structure, homodimer.

It catalyses the reaction aldehydo-D-ribose 5-phosphate = D-ribulose 5-phosphate. It functions in the pathway carbohydrate degradation; pentose phosphate pathway; D-ribose 5-phosphate from D-ribulose 5-phosphate (non-oxidative stage): step 1/1. Functionally, catalyzes the reversible conversion of ribose-5-phosphate to ribulose 5-phosphate. This Pasteurella multocida (strain Pm70) protein is Ribose-5-phosphate isomerase A.